Consider the following 130-residue polypeptide: Small ribosomal subunit protein uS9 (130 aa).

This sequence belongs to the universal ribosomal protein uS9 family.

This is Small ribosomal subunit protein uS9 from Thioalkalivibrio sulfidiphilus (strain HL-EbGR7).